Here is a 275-residue protein sequence, read N- to C-terminus: Bis(5'-nucleosyl)-tetraphosphatase, symmetrical (275 aa).

Belongs to the Ap4A hydrolase family.

The enzyme catalyses P(1),P(4)-bis(5'-adenosyl) tetraphosphate + H2O = 2 ADP + 2 H(+). Hydrolyzes diadenosine 5',5'''-P1,P4-tetraphosphate to yield ADP. The chain is Bis(5'-nucleosyl)-tetraphosphatase, symmetrical from Actinobacillus succinogenes (strain ATCC 55618 / DSM 22257 / CCUG 43843 / 130Z).